A 156-amino-acid chain; its full sequence is Small ribosomal subunit protein uS7 (156 aa).

Belongs to the universal ribosomal protein uS7 family. Part of the 30S ribosomal subunit. Contacts proteins S9 and S11.

One of the primary rRNA binding proteins, it binds directly to 16S rRNA where it nucleates assembly of the head domain of the 30S subunit. Is located at the subunit interface close to the decoding center, probably blocks exit of the E-site tRNA. The polypeptide is Small ribosomal subunit protein uS7 (Bacillus cereus (strain ZK / E33L)).